The primary structure comprises 182 residues: ATP synthase subunit delta (182 aa).

This sequence belongs to the ATPase delta chain family. In terms of assembly, F-type ATPases have 2 components, F(1) - the catalytic core - and F(0) - the membrane proton channel. F(1) has five subunits: alpha(3), beta(3), gamma(1), delta(1), epsilon(1). CF(0) has four main subunits: a(1), b(1), b'(1) and c(10-14). The alpha and beta chains form an alternating ring which encloses part of the gamma chain. F(1) is attached to F(0) by a central stalk formed by the gamma and epsilon chains, while a peripheral stalk is formed by the delta, b and b' chains.

The protein localises to the cellular thylakoid membrane. F(1)F(0) ATP synthase produces ATP from ADP in the presence of a proton or sodium gradient. F-type ATPases consist of two structural domains, F(1) containing the extramembraneous catalytic core and F(0) containing the membrane proton channel, linked together by a central stalk and a peripheral stalk. During catalysis, ATP synthesis in the catalytic domain of F(1) is coupled via a rotary mechanism of the central stalk subunits to proton translocation. Functionally, this protein is part of the stalk that links CF(0) to CF(1). It either transmits conformational changes from CF(0) to CF(1) or is implicated in proton conduction. The chain is ATP synthase subunit delta from Synechococcus sp. (strain CC9311).